Here is a 191-residue protein sequence, read N- to C-terminus: MRIQTCYFCSSKIYPGHGVQFVRNDCKVFKFCRGKCHKAFKRKKNPRKVGWTKAYRKAAGKELAIDPSFEFEKRRNVPMKYSRETWQKGLEAIKRVTEIKEKRTSHFVMERLRKGRQVEIQMDVKDVQRNMSLIRSPAAGLKQRRAQEAAEEAALMEEDLPEEKITYVDARELEKKLEEGMGVEDLEMLEA.

The residue at position 136 (Ser136) is a Phosphoserine.

Belongs to the eukaryotic ribosomal protein eL24 family. As to quaternary structure, associated with nucleolar and cytoplasmic pre-60S particles. At the end of biogenesis it dissociates from cytoplasmic pre-60S particles and is likely to be exchanged for its ribosomal homologue, RPL24.

It is found in the nucleus. Its subcellular location is the nucleolus. Involved in the biogenesis of the 60S ribosomal subunit. Ensures the docking of NOG1 to pre-60S particles. The chain is Probable ribosome biogenesis protein RLP24 (RpL24-like) from Drosophila melanogaster (Fruit fly).